The chain runs to 292 residues: S-adenosyl-L-methionine-dependent Diels-Alderase iccD (292 aa).

Residues 240 to 262 traverse the membrane as a helical segment; the sequence is LPVVRMFYVVLLVPYLFVRLLGI.

This sequence belongs to the class I-like SAM-binding methyltransferase superfamily. Erg6/SMT family. The cofactor is S-adenosyl-L-methionine.

The protein localises to the membrane. It catalyses the reaction 3-[(2E,4E,8S,10E,12Z)-4,8-dimethyltetradeca-2,4,10,12-tetraenoyl]-4-hydroxy-5-(4-hydroxyphenyl)-1,2-dihydropyridin-2-one = 8-epi-ilicicolin H. The protein operates within mycotoxin biosynthesis. In terms of biological role, S-adenosyl-l-methionine-dependent Diels-Alderase; part of the gene cluster that mediates the biosynthesis of ilicicolin H, a 4-hydroxy-2-pyridonealkaloid that has potent and broad antifungal activities by inhibiting the mitochondrial respiration chain. IccD catalyzes the Diels-Alder reaction that converts the acyclic 2-pyridone intermediate to 8-epi-ilicicolin H. The biosynthesis of ilicicolin H starts with formation of the tetramic acid by the hybrid PKS-NRPS synthetase iccA with the partnering trans-enoyl reductase iccB since iccA lacks a designated enoylreductase (ER) domain. The cytochrome P450 monooxygenase iccC then catalyzes the ring expansion of the tetramate to the acyclic 2-pyridone. The pericyclase iccD further converts the acyclic 2-pyridone into 8-epi-ilicicolin H. Finally, the epimerase iccE converts 8-epi-ilicicolin H into ilicicolin H via epimerization. IccA to iccE are sufficient for ilicicolin H biosynthesis and the roles of the remaining enzymes, iccF, iccG and iccH within the pathway have still to be determined. This chain is S-adenosyl-L-methionine-dependent Diels-Alderase iccD, found in Talaromyces variabilis (Penicillium variabile).